The following is a 416-amino-acid chain: Enolase (416 aa).

Glutamine 160 contributes to the (2R)-2-phosphoglycerate binding site. Glutamate 204 (proton donor) is an active-site residue. Residues aspartate 239, glutamate 280, and aspartate 306 each contribute to the Mg(2+) site. 4 residues coordinate (2R)-2-phosphoglycerate: lysine 331, arginine 360, serine 361, and lysine 382. Lysine 331 acts as the Proton acceptor in catalysis.

Belongs to the enolase family. Requires Mg(2+) as cofactor.

The protein resides in the cytoplasm. The protein localises to the secreted. It is found in the cell surface. It carries out the reaction (2R)-2-phosphoglycerate = phosphoenolpyruvate + H2O. It functions in the pathway carbohydrate degradation; glycolysis; pyruvate from D-glyceraldehyde 3-phosphate: step 4/5. Functionally, catalyzes the reversible conversion of 2-phosphoglycerate (2-PG) into phosphoenolpyruvate (PEP). It is essential for the degradation of carbohydrates via glycolysis. The chain is Enolase from Sulfolobus acidocaldarius (strain ATCC 33909 / DSM 639 / JCM 8929 / NBRC 15157 / NCIMB 11770).